The following is a 176-amino-acid chain: MSKVKKNDETLSEVLVDVNRVTKVVKGGRSFAFSAYVVVGDKAGRVGAGHGKAKEVNEARGKAKQAAKKRMMKVPLYQNRTIHHDVVGKSGAAKVILRRAKAGTGIIAGGSMRAIFDSLGVHDIVAKSIGSTNVYAMISATFDALNKLASPKSIAMRRDKKVNEISVKSAEIQVNE.

The S5 DRBM domain occupies 11–74 (LSEVLVDVNR…QAAKKRMMKV (64 aa)).

Belongs to the universal ribosomal protein uS5 family. As to quaternary structure, part of the 30S ribosomal subunit. Contacts proteins S4 and S8.

In terms of biological role, with S4 and S12 plays an important role in translational accuracy. Located at the back of the 30S subunit body where it stabilizes the conformation of the head with respect to the body. This Rickettsia conorii (strain ATCC VR-613 / Malish 7) protein is Small ribosomal subunit protein uS5.